The following is a 258-amino-acid chain: Aspartate/glutamate leucyltransferase (258 aa).

The protein belongs to the R-transferase family. Bpt subfamily.

The protein localises to the cytoplasm. The catalysed reaction is N-terminal L-glutamyl-[protein] + L-leucyl-tRNA(Leu) = N-terminal L-leucyl-L-glutamyl-[protein] + tRNA(Leu) + H(+). It catalyses the reaction N-terminal L-aspartyl-[protein] + L-leucyl-tRNA(Leu) = N-terminal L-leucyl-L-aspartyl-[protein] + tRNA(Leu) + H(+). In terms of biological role, functions in the N-end rule pathway of protein degradation where it conjugates Leu from its aminoacyl-tRNA to the N-termini of proteins containing an N-terminal aspartate or glutamate. This is Aspartate/glutamate leucyltransferase from Rhodopseudomonas palustris (strain BisA53).